The sequence spans 625 residues: Autophagy-related protein 20 (625 aa).

The disordered stretch occupies residues 1-59 (MNPNDNNLFGDIEQDNNPSFYGNQSFLRDPYGKSKQTCPPSVTSNGDPSITNDDNNSAH). 2 stretches are compositionally biased toward polar residues: residues 15–26 (DNNPSFYGNQSF) and 34–59 (SKQT…NSAH). One can recognise a PX domain in the interval 79 to 202 (NDPNLQINVI…HKFLDPNYEL (124 aa)). The a 1,2-diacyl-sn-glycero-3-phospho-(1D-myo-inositol-3-phosphate) site is built by R118, S120, K144, and R167.

This sequence belongs to the sorting nexin family.

The protein resides in the endosome membrane. It localises to the preautophagosomal structure membrane. Its function is as follows. Required for cytoplasm to vacuole transport (Cvt), pexophagy and mitophagy. Also involved in endoplasmic reticulum-specific autophagic process and is essential for the survival of cells subjected to severe ER stress. Functions in protein retrieval from the endocytic pathway. This Debaryomyces hansenii (strain ATCC 36239 / CBS 767 / BCRC 21394 / JCM 1990 / NBRC 0083 / IGC 2968) (Yeast) protein is Autophagy-related protein 20 (ATG20).